A 590-amino-acid chain; its full sequence is Conglutin beta 4 (590 aa).

Positions 1–30 (MIKMRVRFPTLVLLLGIVFLMAVSIGIAYG) are cleaved as a signal peptide. Residues 38-105 (HERPQEREQE…REPRREREQE (68 aa)) show a composition bias toward basic and acidic residues. A disordered region spans residues 38-175 (HERPQEREQE…DSRRQRNPYY (138 aa)). A compositionally biased stretch (low complexity) spans 137–146 (QGSSSSSRRQ). A Cupin type-1 1 domain is found at 174–332 (YYFSSERFQT…TFNTRYEEIQ (159 aa)). The N-linked (GlcNAc...) asparagine glycan is linked to N239. 2 disordered regions span residues 340–362 (DEQE…GVIV) and 374–396 (KYAQ…LRSN). The span at 346-362 (EQRHGQEQSHQDEGVIV) shows a compositional bias: basic and acidic residues. The Cupin type-1 2 domain maps to 391–548 (FNLRSNKPIY…TFPGSTEDVE (158 aa)). N-linked (GlcNAc...) asparagine glycosylation occurs at N498. The tract at residues 559–579 (FANAQPQQQQQREREGRRGRR) is disordered.

This sequence belongs to the 7S seed storage protein family. Component of globulins complexes which accumulate in seeds.

Its function is as follows. Seed storage protein. Accumulates during seed development and is hydrolyzed after germination to provide a carbon and nitrogen source for the developing seedling. The polypeptide is Conglutin beta 4 (Lupinus angustifolius (Narrow-leaved blue lupine)).